Reading from the N-terminus, the 290-residue chain is Small ribosomal subunit biogenesis GTPase RsgA (290 aa).

Residues 62 to 213 (KNSLVRPPIV…IADTPGFSSL (152 aa)) form the CP-type G domain. GTP is bound by residues 111 to 114 (SKLD) and 156 to 164 (GQTGVGKST). Zn(2+)-binding residues include Cys-237, Cys-242, His-244, and Cys-250.

The protein belongs to the TRAFAC class YlqF/YawG GTPase family. RsgA subfamily. In terms of assembly, monomer. Associates with 30S ribosomal subunit, binds 16S rRNA. Zn(2+) serves as cofactor.

Its subcellular location is the cytoplasm. Functionally, one of several proteins that assist in the late maturation steps of the functional core of the 30S ribosomal subunit. Helps release RbfA from mature subunits. May play a role in the assembly of ribosomal proteins into the subunit. Circularly permuted GTPase that catalyzes slow GTP hydrolysis, GTPase activity is stimulated by the 30S ribosomal subunit. The protein is Small ribosomal subunit biogenesis GTPase RsgA of Streptococcus agalactiae serotype V (strain ATCC BAA-611 / 2603 V/R).